Consider the following 86-residue polypeptide: Conotoxin Lt15a (86 aa).

An N-terminal signal peptide occupies residues 1-23; it reads MEKLTILILVATVLLAIQVLVQS. A propeptide spanning residues 24–49 is cleaved from the precursor; sequence DGENPVKGRVKHYAAKRFSALFRGPR.

Belongs to the conotoxin O2 superfamily. Post-translationally, contains 4 disulfide bonds. As to expression, expressed by the venom duct.

The protein resides in the secreted. In Conus litteratus (Lettered cone), this protein is Conotoxin Lt15a.